A 347-amino-acid polypeptide reads, in one-letter code: Quinolinate synthase (347 aa).

2 residues coordinate iminosuccinate: His47 and Ser68. Cys113 lines the [4Fe-4S] cluster pocket. Residues 139–141 (YAN) and Ser156 contribute to the iminosuccinate site. Cys200 contributes to the [4Fe-4S] cluster binding site. Iminosuccinate-binding positions include 226–228 (HPE) and Thr243. Cys297 is a binding site for [4Fe-4S] cluster.

It belongs to the quinolinate synthase family. Type 1 subfamily. It depends on [4Fe-4S] cluster as a cofactor.

It is found in the cytoplasm. The enzyme catalyses iminosuccinate + dihydroxyacetone phosphate = quinolinate + phosphate + 2 H2O + H(+). It functions in the pathway cofactor biosynthesis; NAD(+) biosynthesis; quinolinate from iminoaspartate: step 1/1. In terms of biological role, catalyzes the condensation of iminoaspartate with dihydroxyacetone phosphate to form quinolinate. This is Quinolinate synthase from Escherichia coli O9:H4 (strain HS).